The following is a 284-amino-acid chain: 4-diphosphocytidyl-2-C-methyl-D-erythritol kinase (284 aa).

The active site involves K14. Residue 98–108 (PMGGGLGGGSS) coordinates ATP. D140 is an active-site residue.

Belongs to the GHMP kinase family. IspE subfamily.

The enzyme catalyses 4-CDP-2-C-methyl-D-erythritol + ATP = 4-CDP-2-C-methyl-D-erythritol 2-phosphate + ADP + H(+). Its pathway is isoprenoid biosynthesis; isopentenyl diphosphate biosynthesis via DXP pathway; isopentenyl diphosphate from 1-deoxy-D-xylulose 5-phosphate: step 3/6. Catalyzes the phosphorylation of the position 2 hydroxy group of 4-diphosphocytidyl-2C-methyl-D-erythritol. The protein is 4-diphosphocytidyl-2-C-methyl-D-erythritol kinase of Shewanella halifaxensis (strain HAW-EB4).